The chain runs to 614 residues: 1-deoxy-D-xylulose-5-phosphate synthase (614 aa).

Thiamine diphosphate is bound by residues histidine 74 and 115–117 (AHS). Aspartate 146 lines the Mg(2+) pocket. Thiamine diphosphate is bound by residues 147-148 (GA), asparagine 175, tyrosine 282, and glutamate 363. Asparagine 175 contributes to the Mg(2+) binding site.

It belongs to the transketolase family. DXPS subfamily. In terms of assembly, homodimer. The cofactor is Mg(2+). Thiamine diphosphate is required as a cofactor.

It carries out the reaction D-glyceraldehyde 3-phosphate + pyruvate + H(+) = 1-deoxy-D-xylulose 5-phosphate + CO2. It participates in metabolic intermediate biosynthesis; 1-deoxy-D-xylulose 5-phosphate biosynthesis; 1-deoxy-D-xylulose 5-phosphate from D-glyceraldehyde 3-phosphate and pyruvate: step 1/1. Catalyzes the acyloin condensation reaction between C atoms 2 and 3 of pyruvate and glyceraldehyde 3-phosphate to yield 1-deoxy-D-xylulose-5-phosphate (DXP). The polypeptide is 1-deoxy-D-xylulose-5-phosphate synthase (Nitrosospira multiformis (strain ATCC 25196 / NCIMB 11849 / C 71)).